A 175-amino-acid chain; its full sequence is Translation initiation factor IF-3 (175 aa).

Belongs to the IF-3 family. Monomer.

It localises to the cytoplasm. Functionally, IF-3 binds to the 30S ribosomal subunit and shifts the equilibrium between 70S ribosomes and their 50S and 30S subunits in favor of the free subunits, thus enhancing the availability of 30S subunits on which protein synthesis initiation begins. The chain is Translation initiation factor IF-3 from Staphylococcus aureus (strain USA300).